The primary structure comprises 116 residues: Putative pterin-4-alpha-carbinolamine dehydratase (116 aa).

It belongs to the pterin-4-alpha-carbinolamine dehydratase family.

The catalysed reaction is (4aS,6R)-4a-hydroxy-L-erythro-5,6,7,8-tetrahydrobiopterin = (6R)-L-erythro-6,7-dihydrobiopterin + H2O. The chain is Putative pterin-4-alpha-carbinolamine dehydratase from Stenotrophomonas maltophilia (strain R551-3).